Here is a 173-residue protein sequence, read N- to C-terminus: Flagellar assembly factor FliW (173 aa).

The segment at 152-173 (STTVRRKASPPAAGEDKGDVQE) is disordered.

It belongs to the FliW family. In terms of assembly, interacts with translational regulator CsrA and flagellin(s).

The protein localises to the cytoplasm. Acts as an anti-CsrA protein, binds CsrA and prevents it from repressing translation of its target genes, one of which is flagellin. Binds to flagellin and participates in the assembly of the flagellum. This is Flagellar assembly factor FliW from Nitratidesulfovibrio vulgaris (strain ATCC 29579 / DSM 644 / CCUG 34227 / NCIMB 8303 / VKM B-1760 / Hildenborough) (Desulfovibrio vulgaris).